The following is a 399-amino-acid chain: Stearoyl-[acyl-carrier-protein] 9-desaturase, chloroplastic (399 aa).

Polar residues predominate over residues Met-1–Phe-12. The N-terminal 35 residues, Met-1–Met-35, are a transit peptide targeting the chloroplast. The disordered stretch occupies residues Met-1 to Pro-57. Residues Glu-141, Glu-179, His-182, Glu-232, Glu-265, and His-268 each contribute to the Fe cation site.

It belongs to the fatty acid desaturase type 2 family. In terms of assembly, homodimer. Fe(2+) serves as cofactor.

It localises to the plastid. It is found in the chloroplast. It carries out the reaction octadecanoyl-[ACP] + 2 reduced [2Fe-2S]-[ferredoxin] + O2 + 2 H(+) = (9Z)-octadecenoyl-[ACP] + 2 oxidized [2Fe-2S]-[ferredoxin] + 2 H2O. It participates in lipid metabolism; fatty acid metabolism. Functionally, converts stearoyl-ACP to oleoyl-ACP by introduction of a cis double bond between carbons 9 and 10 of the acyl chain. The polypeptide is Stearoyl-[acyl-carrier-protein] 9-desaturase, chloroplastic (Spinacia oleracea (Spinach)).